The following is a 301-amino-acid chain: 4-diphosphocytidyl-2-C-methyl-D-erythritol kinase (301 aa).

Lys-18 is a catalytic residue. 103–113 is an ATP binding site; sequence PVAAGIGGGSA. Asp-145 is an active-site residue.

It belongs to the GHMP kinase family. IspE subfamily.

It carries out the reaction 4-CDP-2-C-methyl-D-erythritol + ATP = 4-CDP-2-C-methyl-D-erythritol 2-phosphate + ADP + H(+). Its pathway is isoprenoid biosynthesis; isopentenyl diphosphate biosynthesis via DXP pathway; isopentenyl diphosphate from 1-deoxy-D-xylulose 5-phosphate: step 3/6. Catalyzes the phosphorylation of the position 2 hydroxy group of 4-diphosphocytidyl-2C-methyl-D-erythritol. This chain is 4-diphosphocytidyl-2-C-methyl-D-erythritol kinase, found in Bradyrhizobium sp. (strain BTAi1 / ATCC BAA-1182).